The chain runs to 904 residues: Myelin regulatory factor-like protein (904 aa).

The interval 46-132 (LQRQLPDTPP…ATCRHQTGPS (87 aa)) is disordered. The segment covering 100–117 (PSQSMAGQTHSSFQNGYP) has biased composition (polar residues). The segment at residues 108-400 (THSSFQNGYP…SNPGQFENDS (293 aa)) is a DNA-binding region (NDT80). The region spanning 446 to 554 (SDSRVKENIQ…KLTNNLEERI (109 aa)) is the Peptidase S74 domain. A coiled-coil region spans residues 538–575 (GAVKQLCKLTNNLEERIEELEIWNKKLARLKRLSSSWK). The helical transmembrane segment at 624–644 (LVVVLIAVMAFCALTIVALYI) threads the bilayer. The disordered stretch occupies residues 656 to 688 (NLPLSNMTSSPEPALSSTAPTSAPHTTPETTQT). The segment covering 663–688 (TSSPEPALSSTAPTSAPHTTPETTQT) has biased composition (low complexity).

This sequence belongs to the MRF family.

Its subcellular location is the membrane. The polypeptide is Myelin regulatory factor-like protein (Myrfl) (Mus musculus (Mouse)).